We begin with the raw amino-acid sequence, 131 residues long: Large ribosomal subunit protein bL19 (131 aa).

This sequence belongs to the bacterial ribosomal protein bL19 family.

Its function is as follows. This protein is located at the 30S-50S ribosomal subunit interface and may play a role in the structure and function of the aminoacyl-tRNA binding site. This chain is Large ribosomal subunit protein bL19, found in Rhodopseudomonas palustris (strain BisB18).